The primary structure comprises 172 residues: Type IV secretion system putative outer membrane lipoprotein BMEII0036 (172 aa).

The signal sequence occupies residues 1–15; it reads MRTLVMVACAVSLAA. A lipid anchor (N-palmitoyl cysteine) is attached at Cys16. Cys16 carries the S-diacylglycerol cysteine lipid modification. One can recognise an OmpA-like domain in the interval 58–172; that stretch reads WPARPPKQTV…RRVDIEILRK (115 aa).

It localises to the cell outer membrane. The sequence is that of Type IV secretion system putative outer membrane lipoprotein BMEII0036 from Brucella melitensis biotype 1 (strain ATCC 23456 / CCUG 17765 / NCTC 10094 / 16M).